A 138-amino-acid polypeptide reads, in one-letter code: Small ribosomal subunit protein uS11c (138 aa).

The tract at residues methionine 1–valine 22 is disordered.

It belongs to the universal ribosomal protein uS11 family. Part of the 30S ribosomal subunit.

It is found in the plastid. In Cuscuta reflexa (Southern Asian dodder), this protein is Small ribosomal subunit protein uS11c.